A 73-amino-acid polypeptide reads, in one-letter code: uncharacterized protein (73 aa).

An N-terminal signal peptide occupies residues 1–22 (MKILGVTGFILICLLAISVLMD). A helical membrane pass occupies residues 44-66 (TFAEWVVLLFFVLVLVREMYVIY).

It is found in the membrane. This is an uncharacterized protein from Bacillus subtilis (strain 168).